Here is a 324-residue protein sequence, read N- to C-terminus: Lipoyl synthase (324 aa).

[4Fe-4S] cluster-binding residues include Cys-65, Cys-70, Cys-76, Cys-91, Cys-95, Cys-98, and Ser-302. The Radical SAM core domain occupies 77–291 (WEDREATFLI…AQYAEGLGFA (215 aa)).

It belongs to the radical SAM superfamily. Lipoyl synthase family. [4Fe-4S] cluster is required as a cofactor.

It is found in the cytoplasm. It carries out the reaction [[Fe-S] cluster scaffold protein carrying a second [4Fe-4S](2+) cluster] + N(6)-octanoyl-L-lysyl-[protein] + 2 oxidized [2Fe-2S]-[ferredoxin] + 2 S-adenosyl-L-methionine + 4 H(+) = [[Fe-S] cluster scaffold protein] + N(6)-[(R)-dihydrolipoyl]-L-lysyl-[protein] + 4 Fe(3+) + 2 hydrogen sulfide + 2 5'-deoxyadenosine + 2 L-methionine + 2 reduced [2Fe-2S]-[ferredoxin]. It participates in protein modification; protein lipoylation via endogenous pathway; protein N(6)-(lipoyl)lysine from octanoyl-[acyl-carrier-protein]: step 2/2. In terms of biological role, catalyzes the radical-mediated insertion of two sulfur atoms into the C-6 and C-8 positions of the octanoyl moiety bound to the lipoyl domains of lipoate-dependent enzymes, thereby converting the octanoylated domains into lipoylated derivatives. The sequence is that of Lipoyl synthase from Mycobacterium ulcerans (strain Agy99).